Consider the following 341-residue polypeptide: UDP-N-acetylenolpyruvoylglucosamine reductase (341 aa).

In terms of domain architecture, FAD-binding PCMH-type spans 19–191 (MAVRAAHFCQ…TAVRFRLSRR (173 aa)). The active site involves Arg-167. Ser-241 (proton donor) is an active-site residue. Glu-337 is an active-site residue.

The protein belongs to the MurB family. The cofactor is FAD.

The protein resides in the cytoplasm. It carries out the reaction UDP-N-acetyl-alpha-D-muramate + NADP(+) = UDP-N-acetyl-3-O-(1-carboxyvinyl)-alpha-D-glucosamine + NADPH + H(+). The protein operates within cell wall biogenesis; peptidoglycan biosynthesis. Its function is as follows. Cell wall formation. This is UDP-N-acetylenolpyruvoylglucosamine reductase from Chromobacterium violaceum (strain ATCC 12472 / DSM 30191 / JCM 1249 / CCUG 213 / NBRC 12614 / NCIMB 9131 / NCTC 9757 / MK).